The sequence spans 185 residues: MKRNVLLLPLLIFLLIAAALLWQLARNAQGDDPTNLESALTGKPVPAFRLESLETPGQYYQAEVLTQGKPVLLNVWATWCPTCRAEHQYLNRLAAQGIRVVGLNYKDDRAKAVAWLKELGNPYALSLSDSDGMLGLDLGVYGAPETFLIDGRGIIRYRHAGDLNARVWESELKPLWDRYSREAAQ.

At Met-1 to Asn-4 the chain is on the cytoplasmic side. The helical transmembrane segment at Val-5–Ala-25 threads the bilayer. The Periplasmic segment spans residues Arg-26–Gln-185. The 139-residue stretch at Ala-39–Asp-177 folds into the Thioredoxin domain. Cysteines 80 and 83 form a disulfide.

It belongs to the thioredoxin family. DsbE subfamily.

The protein localises to the cell inner membrane. In terms of biological role, involved in disulfide bond formation. Catalyzes a late, reductive step in the assembly of periplasmic c-type cytochromes, probably the reduction of disulfide bonds of the apocytochrome c to allow covalent linkage with the heme. Possible subunit of a heme lyase. The sequence is that of Thiol:disulfide interchange protein DsbE (dsbE1) from Salmonella typhi.